Here is a 383-residue protein sequence, read N- to C-terminus: tRNA-specific 2-thiouridylase MnmA (383 aa).

ATP is bound by residues 30–37 (GLSGGVDS) and Leu56. Residue Cys117 is the Nucleophile of the active site. A disulfide bond links Cys117 and Cys216. Residue Gly142 coordinates ATP. An interaction with tRNA region spans residues 166-168 (KDQ). Cys216 serves as the catalytic Cysteine persulfide intermediate. Residues 321–322 (RY) are interaction with tRNA.

The protein belongs to the MnmA/TRMU family.

It is found in the cytoplasm. It carries out the reaction S-sulfanyl-L-cysteinyl-[protein] + uridine(34) in tRNA + AH2 + ATP = 2-thiouridine(34) in tRNA + L-cysteinyl-[protein] + A + AMP + diphosphate + H(+). Catalyzes the 2-thiolation of uridine at the wobble position (U34) of tRNA, leading to the formation of s(2)U34. This is tRNA-specific 2-thiouridylase MnmA from Synechococcus sp. (strain CC9605).